A 359-amino-acid polypeptide reads, in one-letter code: 3-dehydroquinate synthase (359 aa).

Residues 72-77, 106-110, 130-131, lysine 143, lysine 152, and 170-173 each bind NAD(+); these read DGEQYK, GVIGD, TT, and CLKT. Positions 185, 248, and 265 each coordinate Zn(2+).

It belongs to the sugar phosphate cyclases superfamily. Dehydroquinate synthase family. The cofactor is Co(2+). Zn(2+) serves as cofactor. Requires NAD(+) as cofactor.

Its subcellular location is the cytoplasm. The enzyme catalyses 7-phospho-2-dehydro-3-deoxy-D-arabino-heptonate = 3-dehydroquinate + phosphate. Its pathway is metabolic intermediate biosynthesis; chorismate biosynthesis; chorismate from D-erythrose 4-phosphate and phosphoenolpyruvate: step 2/7. In terms of biological role, catalyzes the conversion of 3-deoxy-D-arabino-heptulosonate 7-phosphate (DAHP) to dehydroquinate (DHQ). In Photobacterium profundum (strain SS9), this protein is 3-dehydroquinate synthase.